The sequence spans 93 residues: uncharacterized protein (93 aa).

This is an uncharacterized protein from Escherichia coli (strain K12).